Consider the following 200-residue polypeptide: Small ribosomal subunit protein uS5 (200 aa).

Positions 1–22 (MAEERGEKRGRRRDRENPRDRD) are enriched in basic and acidic residues. Residues 1–26 (MAEERGEKRGRRRDRENPRDRDDESS) form a disordered region. The S5 DRBM domain maps to 28 to 91 (LVDKLVGINR…EEAKRNLVRI (64 aa)).

The protein belongs to the universal ribosomal protein uS5 family. As to quaternary structure, part of the 30S ribosomal subunit. Contacts proteins S4 and S8.

In terms of biological role, with S4 and S12 plays an important role in translational accuracy. Its function is as follows. Located at the back of the 30S subunit body where it stabilizes the conformation of the head with respect to the body. The chain is Small ribosomal subunit protein uS5 from Hyphomonas neptunium (strain ATCC 15444).